A 1215-amino-acid polypeptide reads, in one-letter code: Kinesin-like protein KIN-7I (1215 aa).

The 325-residue stretch at 3 to 327 (RIHVAVRARP…LQFASRALRV (325 aa)) folds into the Kinesin motor domain. 79–86 (GQTNSGKT) contributes to the ATP binding site. 4 coiled-coil regions span residues 333 to 414 (VNEI…IENL), 571 to 646 (ESEA…AAYE), 708 to 855 (IRDY…KRDS), and 894 to 979 (DMEA…KEDM).

It belongs to the TRAFAC class myosin-kinesin ATPase superfamily. Kinesin family. KIN-7 subfamily.

In Oryza sativa subsp. japonica (Rice), this protein is Kinesin-like protein KIN-7I.